Reading from the N-terminus, the 247-residue chain is MyoD family inhibitor domain-containing protein (247 aa).

Disordered stretches follow at residues 1-67 and 80-110; these read MSCA…NPSA and QLQT…GNGI. Residues 74–247 form the MDFI domain; that stretch reads QPERLPQLQT…MECCGICFPS (174 aa). 2 positions are modified to phosphoserine: serine 129 and serine 141.

Belongs to the MDFI family. As to quaternary structure, interacts with HAND1; the interaction sequesters Hand1 into the nucleolus and inhibits its activity. Interacts (via C-terminus) with ZIC2. Interacts (via C-terminus) with AXIN1, the histidine-rich region of CCNT1/cyclin-T and weakly with LEF1. Interacts with CCNT2. Interacts with GATA2. Interacts (via C-terminus) with Piezo channel composed of PIEZO1 or PIEZO2; the interaction prolongs Piezo channel inactivation. In terms of processing, palmitoylated. As to expression, in the embryo, robust expression is detected between 16.5 and 18.5 dpc in lung, kidney, and salivary glands. In the developing cardiovascular system, it is detected in lymphatic and cardiac valves (at protein level).

Its subcellular location is the cytoplasm. It is found in the secreted. Required to control the activity of various transcription factors through their sequestration in the cytoplasm. Retains nuclear Zic proteins ZIC1, ZIC2 and ZIC3 in the cytoplasm and inhibits their transcriptional activation. Modulates the expression from cellular promoters. Binds to the axin complex, resulting in an increase in the level of free beta-catenin. Affects axin-regulation of the WNT and JNK signaling pathways. Involved in the development of lymphatic vessel valves. Required to promote lymphatic endothelial cell migration, in a process that involves down-regulation of integrin beta 1 activation and control of cell adhesion to the extracellular matrix. Regulates the activity of mechanosensitive Piezo channel. This Mus musculus (Mouse) protein is MyoD family inhibitor domain-containing protein.